A 411-amino-acid polypeptide reads, in one-letter code: Serpin A12 (411 aa).

Positions 1 to 20 (MNLVLGLGLFLAGLLTVKGL) are cleaved as a signal peptide. 2 N-linked (GlcNAc...) asparagine glycosylation sites follow: Asn92 and Asn267. A reactive center loop region spans residues 364–382 (GTEGAAGSGAQTLPMETPR).

The protein belongs to the serpin family. As to quaternary structure, forms a stable complex with KLK7. In terms of processing, glycosylation slightly decreases affinity for heparin, but otherwise has no significant effect on KLK7 inhibitory activity or thermal stability of the protein. Expressed in visceral adipose tissues.

It is found in the secreted. With respect to regulation, inhibition of KLK7 is enhanced by heparin. In terms of biological role, adipokine that modulates insulin action by specifically inhibiting its target protease KLK7 in white adipose tissues. The polypeptide is Serpin A12 (Serpina12) (Rattus norvegicus (Rat)).